Consider the following 149-residue polypeptide: Nucleoside diphosphate kinase 1 (149 aa).

ATP-binding residues include Lys-9, Phe-57, Arg-85, Thr-91, Arg-102, and Asn-112. Catalysis depends on His-115, which acts as the Pros-phosphohistidine intermediate.

It belongs to the NDK family. Requires Mg(2+) as cofactor. Post-translationally, autophosphorylated.

The enzyme catalyses a 2'-deoxyribonucleoside 5'-diphosphate + ATP = a 2'-deoxyribonucleoside 5'-triphosphate + ADP. It catalyses the reaction a ribonucleoside 5'-diphosphate + ATP = a ribonucleoside 5'-triphosphate + ADP. In terms of biological role, major role in the synthesis of nucleoside triphosphates other than ATP. The ATP gamma phosphate is transferred to the NDP beta phosphate via a ping-pong mechanism, using a phosphorylated active-site intermediate. Also exhibits a kinase-like activity towards histone H1. This is Nucleoside diphosphate kinase 1 (NDPK1) from Saccharum officinarum (Sugarcane).